Here is a 178-residue protein sequence, read N- to C-terminus: MSGGKYIDSEGLLYSAPIREQGNIYKPNNKSMADEMNEKQMYDAHTKEIDLVNRDPKHLNDDMVKIDFEDVIAEPEGTHSFDGIWKASFTTFTVTKYWFYRLLSALFGIPMALIWGIYFAILSFLHIWAVVPCIRSYLIEIQCISRIYSICIHTFCDPLFEAIGKIFSNVRIALQKEI.

At S2 the chain carries N-acetylserine. S2 carries the phosphoserine modification. The segment at 2 to 94 (SGGKYIDSEG…WKASFTTFTV (93 aa)) is required for homooligomerization. The Cytoplasmic portion of the chain corresponds to 2 to 104 (SGGKYIDSEG…TKYWFYRLLS (103 aa)). At K5 the chain carries N6-acetyllysine; alternate. K5 participates in a covalent cross-link: Glycyl lysine isopeptide (Lys-Gly) (interchain with G-Cter in ubiquitin); alternate. A Phosphotyrosine modification is found at Y6. Residue S9 is modified to Phosphoserine. Phosphotyrosine; by ABL1 is present on Y14. Y25 is subject to Phosphotyrosine. Residues K26, K30, K39, K47, and K57 each participate in a glycyl lysine isopeptide (Lys-Gly) (interchain with G-Cter in ubiquitin) cross-link. The tract at residues 82–94 (DGIWKASFTTFTV) is interaction with CAVIN3. Residues 105 to 125 (ALFGIPMALIWGIYFAILSFL) constitute an intramembrane region (helical). The Cytoplasmic portion of the chain corresponds to 126–178 (HIWAVVPCIRSYLIEIQCISRIYSICIHTFCDPLFEAIGKIFSNVRIALQKEI). The interval 131 to 142 (VPCIRSYLIEIQ) is interacts with SPRY1, SPRY2, SPRY3 and SPRY4. Residues C133, C143, and C156 are each lipidated (S-palmitoyl cysteine). Positions 149–160 (SICIHTFCDPLF) are interacts with SPRY1, SPRY2, and SPRY4. An interacts with SPRY1, SPRY2, SPRY3 and SPRY4 region spans residues 167–178 (FSNVRIALQKEI).

This sequence belongs to the caveolin family. In terms of assembly, homooligomer. Interacts with GLIPR2. Interacts with NOSTRIN. Interacts with SNAP25 and STX1A. Interacts (via the N-terminus) with DPP4; the interaction is direct. Interacts with CTNNB1, CDH1 and JUP. Interacts with PACSIN2; this interaction induces membrane tubulation. Interacts with SLC7A9. Interacts with BMX and BTK. Interacts with TGFBR1. Interacts with CAVIN3 (via leucine-zipper domain) in a cholesterol-sensitive manner. Interacts with CAVIN1. Interacts with EHD2 in a cholesterol-dependent manner. Forms a ternary complex with UBXN6 and VCP; mediates CAV1 targeting to lysosomes for degradation. Interacts with ABCG1; this interaction regulates ABCG1-mediated cholesterol efflux. Interacts with NEU3; this interaction enhances NEU3 sialidase activity within caveola. Interacts (via C-terminus) with SPRY1, SPRY2 (via C-terminus), SPRY3, and SPRY4. Interacts with IGFBP5; this interaction allows trafficking of IGFBP5 from the plasma membrane to the nucleus. Post-translationally, phosphorylated at Tyr-14 by ABL1 in response to oxidative stress. In terms of processing, ubiquitinated. Undergo monoubiquitination and multi- and/or polyubiquitination. Monoubiquitination of N-terminal lysines promotes integration in a ternary complex with UBXN6 and VCP which promotes oligomeric CAV1 targeting to lysosomes for degradation. Ubiquitinated by ZNRF1; leading to degradation and modulation of the TLR4-mediated immune response.

It localises to the golgi apparatus membrane. It is found in the cell membrane. The protein resides in the membrane. The protein localises to the caveola. Its subcellular location is the membrane raft. In terms of biological role, may act as a scaffolding protein within caveolar membranes. Forms a stable heterooligomeric complex with CAV2 that targets to lipid rafts and drives caveolae formation. Mediates the recruitment of CAVIN proteins (CAVIN1/2/3/4) to the caveolae. Interacts directly with G-protein alpha subunits and can functionally regulate their activity. Involved in the costimulatory signal essential for T-cell receptor (TCR)-mediated T-cell activation. Its binding to DPP4 induces T-cell proliferation and NF-kappa-B activation in a T-cell receptor/CD3-dependent manner. Recruits CTNNB1 to caveolar membranes and may regulate CTNNB1-mediated signaling through the Wnt pathway. Negatively regulates TGFB1-mediated activation of SMAD2/3 by mediating the internalization of TGFBR1 from membrane rafts leading to its subsequent degradation. Binds 20(S)-hydroxycholesterol (20(S)-OHC). This is Caveolin-1 (CAV1) from Didelphis virginiana (North American opossum).